A 597-amino-acid chain; its full sequence is Elongation factor 4 (597 aa).

The tr-type G domain maps to 2-184 (NNIRNFSIIA…ALIAKVPPPK (183 aa)). Residues 14–19 (DHGKST) and 131–134 (NKID) each bind GTP.

The protein belongs to the TRAFAC class translation factor GTPase superfamily. Classic translation factor GTPase family. LepA subfamily.

Its subcellular location is the cell inner membrane. It catalyses the reaction GTP + H2O = GDP + phosphate + H(+). Required for accurate and efficient protein synthesis under certain stress conditions. May act as a fidelity factor of the translation reaction, by catalyzing a one-codon backward translocation of tRNAs on improperly translocated ribosomes. Back-translocation proceeds from a post-translocation (POST) complex to a pre-translocation (PRE) complex, thus giving elongation factor G a second chance to translocate the tRNAs correctly. Binds to ribosomes in a GTP-dependent manner. This Herminiimonas arsenicoxydans protein is Elongation factor 4.